The primary structure comprises 186 residues: Peptide deformylase (186 aa).

2 residues coordinate Fe cation: Cys113 and His156. Glu157 is a catalytic residue. Residue His160 participates in Fe cation binding.

This sequence belongs to the polypeptide deformylase family. Fe(2+) serves as cofactor.

The enzyme catalyses N-terminal N-formyl-L-methionyl-[peptide] + H2O = N-terminal L-methionyl-[peptide] + formate. Functionally, removes the formyl group from the N-terminal Met of newly synthesized proteins. Requires at least a dipeptide for an efficient rate of reaction. N-terminal L-methionine is a prerequisite for activity but the enzyme has broad specificity at other positions. The polypeptide is Peptide deformylase (Lactiplantibacillus plantarum (strain ATCC BAA-793 / NCIMB 8826 / WCFS1) (Lactobacillus plantarum)).